Reading from the N-terminus, the 220-residue chain is Thiopurine S-methyltransferase (220 aa).

Residues W14, L49, E70, and R127 each contribute to the S-adenosyl-L-methionine site.

Belongs to the class I-like SAM-binding methyltransferase superfamily. TPMT family.

The protein resides in the cytoplasm. The catalysed reaction is S-adenosyl-L-methionine + a thiopurine = S-adenosyl-L-homocysteine + a thiopurine S-methylether.. The polypeptide is Thiopurine S-methyltransferase (Gluconobacter oxydans (strain 621H) (Gluconobacter suboxydans)).